A 566-amino-acid polypeptide reads, in one-letter code: Putative pentatricopeptide repeat-containing protein At1g28020 (566 aa).

PPR repeat units follow at residues 136–171 (GDSV…GLLL), 172–206 (RPVP…DVEA), 207–242 (DNVT…GIKL), 243–273 (EWHT…TEQL), 279–309 (LKSA…YKSK), 314–348 (DNNG…PLEF), 349–385 (DHRI…RMNK), 468–504 (DYSV…NVDP), and 505–540 (DLIT…GIKL).

The protein belongs to the PPR family. P subfamily.

This chain is Putative pentatricopeptide repeat-containing protein At1g28020, found in Arabidopsis thaliana (Mouse-ear cress).